Here is a 130-residue protein sequence, read N- to C-terminus: Small ribosomal subunit protein uS11 (130 aa).

Belongs to the universal ribosomal protein uS11 family. As to quaternary structure, part of the 30S ribosomal subunit. Interacts with proteins S7 and S18. Binds to IF-3.

Its function is as follows. Located on the platform of the 30S subunit, it bridges several disparate RNA helices of the 16S rRNA. Forms part of the Shine-Dalgarno cleft in the 70S ribosome. This chain is Small ribosomal subunit protein uS11, found in Shewanella violacea (strain JCM 10179 / CIP 106290 / LMG 19151 / DSS12).